The sequence spans 377 residues: Ribosomal RNA large subunit methyltransferase G (377 aa).

This sequence belongs to the methyltransferase superfamily. RlmG family.

The protein resides in the cytoplasm. It catalyses the reaction guanosine(1835) in 23S rRNA + S-adenosyl-L-methionine = N(2)-methylguanosine(1835) in 23S rRNA + S-adenosyl-L-homocysteine + H(+). In terms of biological role, specifically methylates the guanine in position 1835 (m2G1835) of 23S rRNA. This Shewanella sp. (strain ANA-3) protein is Ribosomal RNA large subunit methyltransferase G.